A 171-amino-acid chain; its full sequence is Neuronal vesicle trafficking-associated protein 2 (171 aa).

The disordered stretch occupies residues 1–21; sequence MVKLNGNPGEKGAKPPSVEDG. The Cytoplasmic segment spans residues 1 to 71; sequence MVKLNGNPGE…FRVPKIAEFT (71 aa). A helical; Signal-anchor for type II membrane protein transmembrane segment spans residues 72 to 92; sequence VTILVSLALAFLACIVFLVVY. The Lumenal portion of the chain corresponds to 93-171; sequence KAFTYDHSCP…EPKPPKTQGH (79 aa).

The protein belongs to the NSG family.

The protein resides in the membrane. Its subcellular location is the golgi apparatus. It localises to the trans-Golgi network membrane. The protein localises to the cell projection. It is found in the dendrite. The protein resides in the endosome membrane. Its subcellular location is the early endosome membrane. It localises to the late endosome membrane. The protein localises to the lysosome lumen. It is found in the cytoplasmic vesicle membrane. The protein resides in the golgi stack membrane. Its subcellular location is the endosome. It localises to the multivesicular body membrane. This is Neuronal vesicle trafficking-associated protein 2 from Rattus norvegicus (Rat).